Consider the following 131-residue polypeptide: Biogenesis of lysosome-related organelles complex 1 subunit CNL1 (131 aa).

Residues 1–29 (MSAPDSNSGHAHDSAQNEGAAEGTRDPFG) form a disordered region. The stretch at 73-101 (DAIDINIEEMRRILQKCEELETHFDMLDQ) forms a coiled coil.

The protein belongs to the BLOC1S4 family. As to quaternary structure, component of the biogenesis of lysosome-related organelles complex-1 (BLOC-1).

The protein localises to the cytoplasm. Component of the biogenesis of lysosome-related organelles complex-1 (BLOC-1), a complex that is involved in endosomal cargo sorting. This is Biogenesis of lysosome-related organelles complex 1 subunit CNL1 (CLN1) from Lachancea thermotolerans (strain ATCC 56472 / CBS 6340 / NRRL Y-8284) (Yeast).